A 2715-amino-acid chain; its full sequence is Chromodomain-helicase-DNA-binding protein 6 (2715 aa).

Over residues 1–11 (MKMKIQKKEKQ) the composition is skewed to basic and acidic residues. Disordered regions lie at residues 1–30 (MKMK…SVNF) and 66–244 (EEAA…QVKR). Positions 1 to 747 (MKMKIQKKEK…MMELRKCCNH (747 aa)) are required for DNA-dependent ATPase activity. A compositionally biased stretch (polar residues) spans 12–27 (LSNLKVLNHSPMSDAS). The span at 123-172 (EPKEPKEPRKAKEPKKAKEHKEPKQKDGAKKARKPREASGTKEAKEKRSC) shows a compositional bias: basic and acidic residues. Chromo domains follow at residues 292–343 (NIIE…KDPR) and 375–439 (VEVD…KHVE). Residues 473–647 (LFNWYNRKNC…FSLLNFLEPS (175 aa)) form the Helicase ATP-binding domain. 486–493 (DEMGLGKT) provides a ligand contact to ATP. The short motif at 598 to 601 (DEAH) is the DEAH box element. In terms of domain architecture, Helicase C-terminal spans 787–956 (LIDKLLPKLI…LSKMEVEDLL (170 aa)). Residues 1318 to 1390 (KSLSAEQGVT…SDPDKSPWPV (73 aa)) are disordered. Residues 1321 to 1330 (SAEQGVTDGT) show a composition bias toward polar residues. Basic and acidic residues-rich tracts occupy residues 1333–1351 (IPER…KVDG) and 1367–1376 (FSEKKDDSRA). The Myb-like domain occupies 1449–1503 (RWTRREQADFYRTVSSFGVVYDQEKKTFDWTQFRIISRLDKKSDESLEQYFYSFV). Residues 2027-2038 (FENKDDYDRDGN) are compositionally biased toward basic and acidic residues. Disordered regions lie at residues 2027–2063 (FENK…ITGD), 2116–2148 (SQQY…AAEH), 2321–2351 (QATL…QAEK), 2373–2422 (PGFG…FLPE), 2547–2602 (TSTA…PAIT), and 2648–2715 (VGLE…NDTN). Polar residues predominate over residues 2116 to 2141 (SQQYEPSGTLPTPVLTSSAGSRTSLS). Over residues 2329–2346 (PEGPGPATSAPEPATAAS) the composition is skewed to low complexity. Low complexity predominate over residues 2547–2560 (TSTAPASLSSTTKS). Composition is skewed to basic and acidic residues over residues 2567–2588 (KTAE…EDKP) and 2706–2715 (ALKDSNNDTN).

The protein belongs to the SNF2/RAD54 helicase family. In terms of assembly, interacts with NFE2L2; involved in activation of the transcription. As to quaternary structure, (Microbial infection) Interacts with the influenza A polymerase complex composed fo PB1, PB2 and PA. (Microbial infection) Interacts (via N-terminus) with human papillomavirus protein E8^E2C (via C-terminus); this interaction induces transcriptional repression of the viral genome. In terms of tissue distribution, widely expressed.

The protein localises to the nucleus. It is found in the nucleoplasm. It carries out the reaction ATP + H2O = ADP + phosphate + H(+). ATP-dependent chromatin-remodeling factor. Regulates transcription by disrupting nucleosomes in a largely non-sliding manner which strongly increases the accessibility of chromatin; nucleosome disruption requires ATP. Activates transcription of specific genes in response to oxidative stress through interaction with NFE2L2. Functionally, (Microbial infection) Acts as a transcriptional repressor of different viruses including influenza virus or papillomavirus. During influenza virus infection, the viral polymerase complex localizes CHD6 to inactive chromatin where it gets degraded in a proteasome independent-manner. The polypeptide is Chromodomain-helicase-DNA-binding protein 6 (CHD6) (Homo sapiens (Human)).